The primary structure comprises 1710 residues: Ankyrin repeat domain-containing protein 26 (1710 aa).

Residues 1–41 (MKKIFSKKGESPLGSFARRQRSSAGGGGEPGEGAYSQPGYH) are disordered. Phosphoserine occurs at positions 11 and 15. ANK repeat units follow at residues 45 to 75 (RDLG…GLND), 79 to 108 (MNRT…QLNV), 112 to 141 (ENRT…DPNL), 145 to 174 (HGNT…NIEA), and 178 to 207 (DDLT…NVNA). A disordered region spans residues 222-274 (KEERIPKHSSQNSNSVDESSEDSLSRLSGKPGVDDSWPTSDDEDLNFDTKNVP). Phosphoserine is present on residues S241, S261, S489, and S530. The tract at residues 504-630 (DSVPNKAGGM…EKRTSKESVN (127 aa)) is disordered. Positions 529–566 (ASEEEQEREGSENNQPQVEEERKKHRNNEMEVSANIHD) form a coiled coil. Positions 569-580 (TDDAEDDDDDDG) are enriched in acidic residues. Composition is skewed to basic and acidic residues over residues 586–602 (KSGE…ENKE) and 613–626 (KEVK…RTSK). S631 carries the post-translational modification Phosphoserine. Residues 650–660 (DSSLSEIDEDE) show a composition bias toward acidic residues. The tract at residues 650–698 (DSSLSEIDEDEGRPTKKTSNEKNKVKNQIQSMDDVDDLTQSSETASEDC) is disordered. Residues 661–673 (GRPTKKTSNEKNK) show a composition bias toward basic and acidic residues. Coiled coils occupy residues 743–873 (KNHC…NARM), 905–1472 (EEEK…MVEL), 1517–1587 (NNFA…NTKL), and 1649–1674 (LSKM…LESG). Positions 892-912 (AQKKMNSENSHSHEEEKDLSH) are disordered.

As to quaternary structure, interacts with TRIO. Interacts with GPS2. Interacts with CCDC85B. Interacts with HMMR.

Acts as a regulator of adipogenesis. Involved in the regulation of the feeding behavior. This is Ankyrin repeat domain-containing protein 26 from Homo sapiens (Human).